The following is a 320-amino-acid chain: Protoheme IX farnesyltransferase (320 aa).

9 consecutive transmembrane segments (helical) span residues 38 to 58 (VIEL…RGFP), 60 to 80 (IGLI…AGVF), 109 to 129 (EALV…WFGA), 132 to 152 (LSAW…TMIL), 159 to 179 (NIVW…AAVT), 184 to 204 (WPAI…YWPL), 222 to 242 (AIAG…AMVA), 254 to 276 (GWVY…HALY), and 299 to 319 (YLTL…AIVG).

The protein belongs to the UbiA prenyltransferase family. Protoheme IX farnesyltransferase subfamily.

Its subcellular location is the cell membrane. It catalyses the reaction heme b + (2E,6E)-farnesyl diphosphate + H2O = Fe(II)-heme o + diphosphate. It functions in the pathway porphyrin-containing compound metabolism; heme O biosynthesis; heme O from protoheme: step 1/1. Its function is as follows. Converts heme B (protoheme IX) to heme O by substitution of the vinyl group on carbon 2 of heme B porphyrin ring with a hydroxyethyl farnesyl side group. The protein is Protoheme IX farnesyltransferase of Paenarthrobacter aurescens (strain TC1).